A 331-amino-acid chain; its full sequence is Protein PER1 homolog (331 aa).

Positions 1 to 24 are cleaved as a signal peptide; sequence MRVLRNFTIFFLFTALSLFRQISA. The Lumenal portion of the chain corresponds to 25-100; the sequence is SAGDLHPVYV…QYHGKWYFIR (76 aa). A helical membrane pass occupies residues 101–121; the sequence is VFGIQELFSVFFSMLNFMIHY. Topologically, residues 122-139 are cytoplasmic; that stretch reads NGYHIMRRCIPDEHPAKR. A helical membrane pass occupies residues 140 to 160; the sequence is LCLSWAIVGMNAWVWSSVFHI. The Lumenal segment spans residues 161–168; it reads RDTPITEK. Residues 169 to 189 form a helical membrane-spanning segment; that stretch reads LDYFSAGAFVLFGSYCTLILM. Residues 190–199 are Cytoplasmic-facing; the sequence is LRLDQLPGGK. A helical transmembrane segment spans residues 200–220; sequence LLCWIIGVIFIAAFIAHVSYL. Topologically, residues 221 to 232 are lumenal; it reads SFYSFDYGYNMK. Residues 233–250 form a helical membrane-spanning segment; sequence ANVAVGLVQNILWYYYSW. Residues 251–263 lie on the Cytoplasmic side of the membrane; the sequence is SNRNSGLYWTRWP. The chain crosses the membrane as a helical span at residues 264–284; that stretch reads AYIVTSLMLATSLELFDFSPI. At 285-289 the chain is on the lumenal side; it reads ANLID. Residues 290–310 traverse the membrane as a helical segment; sequence AHALWHLSTVPITHYLYGFVV. Over 311 to 331 the chain is Cytoplasmic; that stretch reads RKCSYDLTKGTFKIKAYDSSR.

The protein belongs to the PGAP3/PER1 family.

Its subcellular location is the endoplasmic reticulum membrane. It localises to the vacuole membrane. In terms of biological role, involved in the lipid remodeling steps of GPI-anchor maturation. Lipid remodeling steps consist in the generation of 2 saturated fatty chains at the sn-2 position of GPI-anchors proteins. Required for phospholipase A2 activity that removes an acyl-chain at the sn-2 position of GPI-anchors during the remodeling of GPI. Required for efficient transport of GPI-anchor proteins. The protein is Protein PER1 homolog of Schizosaccharomyces pombe (strain 972 / ATCC 24843) (Fission yeast).